The following is a 387-amino-acid chain: 1-deoxy-D-xylulose 5-phosphate reductoisomerase (387 aa).

NADPH is bound by residues threonine 11, glycine 12, serine 13, isoleucine 14, glycine 37, arginine 38, asparagine 39, and asparagine 125. Residue lysine 126 participates in 1-deoxy-D-xylulose 5-phosphate binding. Glutamate 127 is a binding site for NADPH. Aspartate 151 is a binding site for Mn(2+). 1-deoxy-D-xylulose 5-phosphate contacts are provided by serine 152, glutamate 153, serine 177, and histidine 200. Position 153 (glutamate 153) interacts with Mn(2+). Residue glycine 206 coordinates NADPH. 1-deoxy-D-xylulose 5-phosphate contacts are provided by serine 213, asparagine 218, lysine 219, and glutamate 222. Residue glutamate 222 coordinates Mn(2+).

Belongs to the DXR family. Mg(2+) serves as cofactor. Requires Mn(2+) as cofactor.

It carries out the reaction 2-C-methyl-D-erythritol 4-phosphate + NADP(+) = 1-deoxy-D-xylulose 5-phosphate + NADPH + H(+). It participates in isoprenoid biosynthesis; isopentenyl diphosphate biosynthesis via DXP pathway; isopentenyl diphosphate from 1-deoxy-D-xylulose 5-phosphate: step 1/6. Functionally, catalyzes the NADPH-dependent rearrangement and reduction of 1-deoxy-D-xylulose-5-phosphate (DXP) to 2-C-methyl-D-erythritol 4-phosphate (MEP). The protein is 1-deoxy-D-xylulose 5-phosphate reductoisomerase of Desulforamulus reducens (strain ATCC BAA-1160 / DSM 100696 / MI-1) (Desulfotomaculum reducens).